We begin with the raw amino-acid sequence, 175 residues long: Alpha-crystallin B chain (175 aa).

Met-1 is subject to N-acetylmethionine. Phosphoserine occurs at positions 19, 45, and 59. Residues 56–164 (RAPSWIDTGL…PERTIPITRE (109 aa)) form the sHSP domain. Residue His-83 participates in Zn(2+) binding. The residue at position 92 (Lys-92) is an N6-acetyllysine. His-104, Glu-106, His-111, and His-119 together coordinate Zn(2+). The tract at residues 142-175 (VLTVNGPRKQASGPERTIPITREEKPAVTAAPKK) is disordered. N6-acetyllysine is present on Lys-166. Residue Thr-170 is glycosylated (O-linked (GlcNAc) threonine).

It belongs to the small heat shock protein (HSP20) family. As to quaternary structure, heteromer composed of three CRYAA and one CRYAB subunits. Aggregates with homologous proteins, including the small heat shock protein HSPB1, to form large heteromeric complexes. Inter-subunit bridging via zinc ions enhances stability, which is crucial as there is no protein turn over in the lens. Interacts with HSPBAP1. Interacts with TTN/titin. Interacts with TMEM109; in the cellular response to DNA damage. Interacts with DES; binds rapidly during early stages of DES filament assembly and a reduced binding seen in the later stages. Interacts with TMED10; the interaction mediates the translocation from the cytoplasm into the ERGIC (endoplasmic reticulum-Golgi intermediate compartment) and thereby secretion. Interacts with ATP6V1A and with MTOR, forming a ternary complex. As to expression, lens as well as other tissues.

It localises to the cytoplasm. Its subcellular location is the nucleus. The protein resides in the secreted. It is found in the lysosome. Functionally, may contribute to the transparency and refractive index of the lens. Has chaperone-like activity, preventing aggregation of various proteins under a wide range of stress conditions. In lens epithelial cells, stabilizes the ATP6V1A protein, preventing its degradation by the proteasome. This is Alpha-crystallin B chain from Rattus norvegicus (Rat).